The primary structure comprises 376 residues: Chaperone protein DnaJ (376 aa).

Residues 4–69 form the J domain; the sequence is DFYETLGVQK…QKRAAYDRFG (66 aa). The segment at 133–211 adopts a CR-type zinc-finger fold; that stretch reads GKTAQIRVPA…CAGQGRVTEE (79 aa). The Zn(2+) site is built by C146, C149, C163, C166, C185, C188, C199, and C202. CXXCXGXG motif repeat units lie at residues 146–153, 163–170, 185–192, and 199–206; these read CTECSGSG, CSMCHGHG, CPQCQGRG, and CPKCAGQG.

This sequence belongs to the DnaJ family. In terms of assembly, homodimer. Requires Zn(2+) as cofactor.

It is found in the cytoplasm. In terms of biological role, participates actively in the response to hyperosmotic and heat shock by preventing the aggregation of stress-denatured proteins and by disaggregating proteins, also in an autonomous, DnaK-independent fashion. Unfolded proteins bind initially to DnaJ; upon interaction with the DnaJ-bound protein, DnaK hydrolyzes its bound ATP, resulting in the formation of a stable complex. GrpE releases ADP from DnaK; ATP binding to DnaK triggers the release of the substrate protein, thus completing the reaction cycle. Several rounds of ATP-dependent interactions between DnaJ, DnaK and GrpE are required for fully efficient folding. Also involved, together with DnaK and GrpE, in the DNA replication of plasmids through activation of initiation proteins. The polypeptide is Chaperone protein DnaJ (Mesorhizobium japonicum (strain LMG 29417 / CECT 9101 / MAFF 303099) (Mesorhizobium loti (strain MAFF 303099))).